Here is a 570-residue protein sequence, read N- to C-terminus: Serine/threonine-protein kinase Pink1, mitochondrial (570 aa).

Residues 1–5 constitute a mitochondrion transit peptide; the sequence is MSVRA. Over 6-96 the chain is Mitochondrial intermembrane; it reads VGSRLFKHGR…AELRKKATRR (91 aa). The chain crosses the membrane as a helical span at residues 97–120; it reads ILFGDSAPFFALVGVSIASGTGIL. Residues 121-570 lie on the Cytoplasmic side of the membrane; it reads TKEEELEGVC…WIQENLPELD (450 aa). The Protein kinase domain occupies 162–484; it reads LSLGKPIAKG…VAANVCQLFL (323 aa). K196 contacts ATP. S205 is subject to Phosphoserine; by autocatalysis. E217 is a binding site for Mg(2+). ATP-binding residues include K295, Y297, and N300. D337 serves as the catalytic Proton acceptor. D341 serves as a coordination point for ATP. Residues N342 and D359 each contribute to the Mg(2+) site. D359 contacts ATP. At S377 the chain carries Phosphoserine; by autocatalysis. T386 carries the phosphothreonine; by autocatalysis modification. Residue T530 is modified to Phosphothreonine.

It belongs to the protein kinase superfamily. Ser/Thr protein kinase family. Mg(2+) serves as cofactor. Proteolytically cleaved. In healthy cells, the precursor is continuously imported into mitochondria where it is proteolytically cleaved into its short form by the mitochondrial rhomboid protease rho-7 (TcasGA2_TC013516). The short form is then released into the cytosol where it rapidly undergoes proteasome-dependent degradation. In unhealthy cells, when cellular stress conditions lead to the loss of mitochondrial membrane potential, mitochondrial import is impaired leading to the precursor accumulating on the outer mitochondrial membrane (OMM). Post-translationally, autophosphorylated on Ser-205, which activates kinase activity and is required for substrate recognition. Loss of mitochondrial membrane potential results in the precursor accumulating on the outer mitochondrial membrane (OMM) where it is activated by autophosphorylation at Ser-205. Autophosphorylation is sufficient and essential for selective recruitment of park to depolarized mitochondria, likely via Pink1-dependent phosphorylation of polyubiquitin chains. Also autophosphorylated at Ser-377, Thr-386 and possibly Thr-530. Another report found evidence of autophosphorylation at Ser-154, Thr-186, Thr-218, Ser-267 and Thr-530, as well as a number of other minor sites, but determined that phosphorylation at these sites is not required for enzyme activity and may not occur in vivo.

It is found in the mitochondrion outer membrane. The protein resides in the mitochondrion inner membrane. The protein localises to the cytoplasm. It localises to the cytosol. It catalyses the reaction L-seryl-[protein] + ATP = O-phospho-L-seryl-[protein] + ADP + H(+). The catalysed reaction is L-threonyl-[protein] + ATP = O-phospho-L-threonyl-[protein] + ADP + H(+). Acts as a serine/threonine-protein kinase. Exhibits a substrate preference for proline at position P+1 and a general preference at several residues for basic residues such as arginine. Also exhibits moderate preferences for a phosphotyrosine at position P-3 and a tryptophan at P-5. Critical to mitochondrial homeostasis it mediates several pathways that maintain mitochondrial health and function. Protects against mitochondrial dysfunction during cellular stress by phosphorylating mitochondrial proteins such as park and likely Drp1, to coordinate mitochondrial quality control mechanisms that remove and replace dysfunctional mitochondrial components. Depending on the severity of mitochondrial damage and/or dysfunction, activity ranges from preventing apoptosis and stimulating mitochondrial biogenesis to regulating mitochondrial dynamics and eliminating severely damaged mitochondria via mitophagy. Appears to be particularly important in maintaining the physiology and function of cells with high energy demands that are undergoing stress or altered metabolic environment, including spermatids, muscle cells and neurons such as the dopaminergic (DA) neurons. Mediates the translocation and activation of park at the outer membrane (OMM) of dysfunctional/depolarized mitochondria. At the OMM of damaged mitochondria, phosphorylates pre-existing polyubiquitin chains, the Pink1-phosphorylated polyubiquitin then recruits park from the cytosol to the OMM where park is fully activated by phosphorylation at 'Ser-80' by Pink1. When cellular stress results in irreversible mitochondrial damage, functions with park to promote the clearance of dysfunctional and/or depolarized mitochondria by selective autophagy (mitophagy). The Pink1-park pathway also promotes fission and/or inhibits fusion of damaged mitochondria, by phosphorylating and thus promoting the park-dependent degradation of proteins involved in mitochondrial fusion/fission such as Marf, Opa1 and fzo. This prevents the refusion of unhealthy mitochondria with the mitochondrial network or initiates mitochondrial fragmentation facilitating their later engulfment by autophagosomes. Also likely to promote mitochondrial fission independently of park and Atg7-mediated mitophagy, via the phosphorylation and activation of Drp1. Regulates motility of damaged mitochondria by phosphorylating Miro which likely promotes its park-dependent degradation by the proteasome; in motor neurons, this inhibits mitochondrial intracellular anterograde transport along the axons which probably increases the chance of the mitochondria being eliminated in the soma. The Pink1-park pathway is also involved in mitochondrial regeneration processes such as promoting mitochondrial biogenesis, activating localized mitochondrial repair, promoting selective turnover of mitochondrial proteins and initiating the mitochondrial import of endogenous proteins. Involved in mitochondrial biogenesis by promoting the park-dependent ubiquitination of transcriptional repressor Paris which leads to its subsequent proteasomal degradation and allows activation of the transcription factor srl. Functions with park to promote localized mitochondrial repair by activating the translation of specific nuclear-encoded mitochondrial RNAs (nc-mtRNAs) on the mitochondrial surface, including several key electron transport chain component nc-mtRNAs. During oogenesis, phosphorylates and inactivates larp on the membrane of defective mitochondria, thus impairing local translation and mtDNA replication and consequently, reducing transmission of deleterious mtDNA mutations to the mature oocyte. Phosphorylates the mitochondrial acyl-CoA dehydrogenase Mcad, and appears to be important for maintaining fatty acid and amino acid metabolism via a mechanism that is independent of it's role in maintaining production of ATP. The chain is Serine/threonine-protein kinase Pink1, mitochondrial from Tribolium castaneum (Red flour beetle).